A 206-amino-acid chain; its full sequence is Molybdopterin synthase catalytic subunit (206 aa).

Residues 1–23 are compositionally biased toward polar residues; the sequence is MATQQPTQTDNSAQAQPPQTNPA. The tract at residues 1–27 is disordered; sequence MATQQPTQTDNSAQAQPPQTNPAKPTE. Residues 131-132, Lys147, and 154-156 contribute to the substrate site; these read HR and KRE. The span at 177–188 shows a compositional bias: basic and acidic residues; it reads KVDEPRIGKGEV. The disordered stretch occupies residues 177–206; the sequence is KVDEPRIGKGEVDEKEDEGDSGNGGNDRKS. Residues 197–206 show a composition bias toward gly residues; sequence SGNGGNDRKS.

It belongs to the MoaE family. MOCS2B subfamily. Heterotetramer; composed of 2 small (MOCS2A) and 2 large (MOCS2B) subunits.

It is found in the cytoplasm. It catalyses the reaction 2 [molybdopterin-synthase sulfur-carrier protein]-C-terminal-Gly-aminoethanethioate + cyclic pyranopterin phosphate + H2O = molybdopterin + 2 [molybdopterin-synthase sulfur-carrier protein]-C-terminal Gly-Gly + 2 H(+). Its pathway is cofactor biosynthesis; molybdopterin biosynthesis. Functionally, catalytic subunit of the molybdopterin synthase complex, a complex that catalyzes the conversion of precursor Z into molybdopterin. Acts by mediating the incorporation of 2 sulfur atoms from thiocarboxylated MOCS2A into precursor Z to generate a dithiolene group. This is Molybdopterin synthase catalytic subunit (nit-8) from Neurospora crassa (strain ATCC 24698 / 74-OR23-1A / CBS 708.71 / DSM 1257 / FGSC 987).